We begin with the raw amino-acid sequence, 492 residues long: Steroid 21-hydroxylase (492 aa).

Residues arginine 91 and lysine 120 each contribute to the heme b site. Arginine 231 contacts 17alpha-hydroxyprogesterone. Arginine 231 is a binding site for progesterone. The heme b site is built by histidine 363, arginine 424, and cysteine 426.

Belongs to the cytochrome P450 family. Heme b serves as cofactor.

The protein resides in the endoplasmic reticulum membrane. The protein localises to the microsome membrane. It catalyses the reaction 17alpha-hydroxyprogesterone + reduced [NADPH--hemoprotein reductase] + O2 = 11-deoxycortisol + oxidized [NADPH--hemoprotein reductase] + H2O + H(+). The catalysed reaction is progesterone + reduced [NADPH--hemoprotein reductase] + O2 = 21-hydroxyprogesterone + oxidized [NADPH--hemoprotein reductase] + H2O + H(+). In terms of biological role, specifically catalyzes the 21-hydroxylation of steroids. Required for the adrenal synthesis of mineralocorticoids and glucocorticoids. This chain is Steroid 21-hydroxylase (CYP21), found in Lynx lynx (Eurasian lynx).